The primary structure comprises 377 residues: Chaperone protein DnaJ (377 aa).

A J domain is found at 5 to 70 (DYYELLGLQK…EKKAKYDQFG (66 aa)). A CR-type zinc finger spans residues 137 to 219 (GVEKEISVTR…CRGKGSVRKT (83 aa)). Cysteine 150, cysteine 153, cysteine 167, cysteine 170, cysteine 193, cysteine 196, cysteine 207, and cysteine 210 together coordinate Zn(2+). CXXCXGXG motif repeat units follow at residues 150 to 157 (CEHCHGSG), 167 to 174 (CPTCSGSG), 193 to 200 (CDTCRGTG), and 207 to 214 (CSECRGKG).

The protein belongs to the DnaJ family. Homodimer. Zn(2+) is required as a cofactor.

The protein localises to the cytoplasm. Functionally, participates actively in the response to hyperosmotic and heat shock by preventing the aggregation of stress-denatured proteins and by disaggregating proteins, also in an autonomous, DnaK-independent fashion. Unfolded proteins bind initially to DnaJ; upon interaction with the DnaJ-bound protein, DnaK hydrolyzes its bound ATP, resulting in the formation of a stable complex. GrpE releases ADP from DnaK; ATP binding to DnaK triggers the release of the substrate protein, thus completing the reaction cycle. Several rounds of ATP-dependent interactions between DnaJ, DnaK and GrpE are required for fully efficient folding. Also involved, together with DnaK and GrpE, in the DNA replication of plasmids through activation of initiation proteins. This Clostridium beijerinckii (strain ATCC 51743 / NCIMB 8052) (Clostridium acetobutylicum) protein is Chaperone protein DnaJ.